The sequence spans 600 residues: Elongation factor 4 (600 aa).

The 183-residue stretch at 5 to 187 (KYIRNFSIIA…AIVSKLPPPK (183 aa)) folds into the tr-type G domain. Residues 17–22 (DHGKST) and 134–137 (NKLD) contribute to the GTP site.

This sequence belongs to the TRAFAC class translation factor GTPase superfamily. Classic translation factor GTPase family. LepA subfamily.

The protein resides in the cell inner membrane. The enzyme catalyses GTP + H2O = GDP + phosphate + H(+). Required for accurate and efficient protein synthesis under certain stress conditions. May act as a fidelity factor of the translation reaction, by catalyzing a one-codon backward translocation of tRNAs on improperly translocated ribosomes. Back-translocation proceeds from a post-translocation (POST) complex to a pre-translocation (PRE) complex, thus giving elongation factor G a second chance to translocate the tRNAs correctly. Binds to ribosomes in a GTP-dependent manner. The polypeptide is Elongation factor 4 (Rickettsia rickettsii (strain Iowa)).